Here is a 170-residue protein sequence, read N- to C-terminus: uncharacterized protein (170 aa).

The stretch at 15–81 (EAFDEKAEKE…EREKSKSAVS (67 aa)) forms a coiled coil. Residues 20-77 (KAEKEKVEKEKALKEKTEKEKAEKEKAEKEKVEKEKAEKEKAAKEKAAKEKAEREKSK) show a composition bias toward basic and acidic residues. The disordered stretch occupies residues 20 to 95 (KAEKEKVEKE…NQNSNKGNVE (76 aa)). Polar residues predominate over residues 78 to 92 (SAVSPATTNQNSNKG). The helical transmembrane segment at 98-118 (VAIGVLAGGAVTGVAVGGAYL) threads the bilayer.

The protein localises to the membrane. This is an uncharacterized protein from Dictyostelium discoideum (Social amoeba).